A 266-amino-acid polypeptide reads, in one-letter code: Protein-ADP-ribose hydrolase (266 aa).

Positions 74 to 265 constitute a Macro domain; sequence TDLKDLKPIK…LYKEAFNRDA (192 aa). 3 residues coordinate ADP-D-ribose: aspartate 93, isoleucine 94, and asparagine 107. Residues cysteine 113, histidine 118, and cysteine 120 each coordinate Zn(2+). Cysteine 120, isoleucine 121, aspartate 122, serine 212, threonine 213, glycine 214, and phenylalanine 216 together coordinate ADP-D-ribose.

It belongs to the MacroD-type family. Zn-Macro subfamily. It depends on Zn(2+) as a cofactor.

It catalyses the reaction 4-O-(ADP-D-ribosyl)-L-aspartyl-[protein] + H2O = L-aspartyl-[protein] + ADP-D-ribose + H(+). Functionally, ADP-ribosylhydrolase that specifically reverses the SirTM-mediated mono-ADP-ribosylation at an asparatate residue of GcvH-L, by releasing ADP-ribose from the target protein. May play a role in the regulation of the response to host-induced oxidative stress. The sequence is that of Protein-ADP-ribose hydrolase from Staphylococcus aureus (strain MSSA476).